Consider the following 115-residue polypeptide: MDMPANIQNQLMQFQQLQQQLQTIVMQKQQLEAQIKEMEKAMEEMEKSEDSTVYKMAGGILVSRNKEDVKEELSEKVETYKVRITTFAKQEEKMQKRLTDMQESLQKALQGTNIA.

The protein belongs to the prefoldin subunit beta family. In terms of assembly, heterohexamer of two alpha and four beta subunits.

The protein resides in the cytoplasm. Molecular chaperone capable of stabilizing a range of proteins. Seems to fulfill an ATP-independent, HSP70-like function in archaeal de novo protein folding. This chain is Prefoldin subunit beta, found in Methanococcus aeolicus (strain ATCC BAA-1280 / DSM 17508 / OCM 812 / Nankai-3).